Consider the following 234-residue polypeptide: Large ribosomal subunit protein uL1 (234 aa).

It belongs to the universal ribosomal protein uL1 family. Part of the 50S ribosomal subunit.

Binds directly to 23S rRNA. The L1 stalk is quite mobile in the ribosome, and is involved in E site tRNA release. Functionally, protein L1 is also a translational repressor protein, it controls the translation of the L11 operon by binding to its mRNA. This chain is Large ribosomal subunit protein uL1, found in Aliivibrio fischeri (strain MJ11) (Vibrio fischeri).